Here is a 200-residue protein sequence, read N- to C-terminus: MSTKSYDYLIKLLLIGDSGVGKSCLLLRFSEDSFTPSFITTIGIDFKIRTIELDGKRIKLQIWDTAGQERFRTITTAYYRGAMGILLLYDVTDKKSFDNVRTWFSNVEQHASENVYKILIGNKCDCEDQRQVSFEQGQALADELGVKFLEASAKTNVNVDEAFFTLAREIKKQKIDAENEFSNQANNVDLGNDRTVKRCC.

16–23 (GDSGVGKS) contacts GTP. Residues 38-46 (FITTIGIDF) carry the Effector region motif. Residues 64–68 (DTAGQ) and 122–125 (NKCD) contribute to the GTP site. Residues cysteine 199 and cysteine 200 are each lipidated (S-geranylgeranyl cysteine).

This sequence belongs to the small GTPase superfamily. Rab family.

The protein localises to the cell membrane. Protein transport. Probably involved in vesicular traffic. The sequence is that of GTP-binding protein ypt2 (ypt2) from Schizosaccharomyces pombe (strain 972 / ATCC 24843) (Fission yeast).